The sequence spans 20 residues: Cytochrome c oxidase subunit 5A-1, mitochondrial (20 aa).

Belongs to the cytochrome c oxidase subunit 5A family. In terms of assembly, component of the cytochrome c oxidase (complex IV, CIV), a multisubunit enzyme composed of 14 subunits. The complex is composed of a catalytic core of 3 subunits MT-CO1, MT-CO2 and MT-CO3, encoded in the mitochondrial DNA, and 11 supernumerary subunits COX4I, COX5A, COX5B, COX6A, COX6B, COX6C, COX7A, COX7B, COX7C, COX8 and NDUFA4, which are encoded in the nuclear genome. The complex exists as a monomer or a dimer and forms supercomplexes (SCs) in the inner mitochondrial membrane with NADH-ubiquinone oxidoreductase (complex I, CI) and ubiquinol-cytochrome c oxidoreductase (cytochrome b-c1 complex, complex III, CIII), resulting in different assemblies (supercomplex SCI(1)III(2)IV(1) and megacomplex MCI(2)III(2)IV(2)). Interacts with AFG1L. Interacts with RAB5IF.

The protein resides in the mitochondrion inner membrane. It participates in energy metabolism; oxidative phosphorylation. Its function is as follows. Component of the cytochrome c oxidase, the last enzyme in the mitochondrial electron transport chain which drives oxidative phosphorylation. The respiratory chain contains 3 multisubunit complexes succinate dehydrogenase (complex II, CII), ubiquinol-cytochrome c oxidoreductase (cytochrome b-c1 complex, complex III, CIII) and cytochrome c oxidase (complex IV, CIV), that cooperate to transfer electrons derived from NADH and succinate to molecular oxygen, creating an electrochemical gradient over the inner membrane that drives transmembrane transport and the ATP synthase. Cytochrome c oxidase is the component of the respiratory chain that catalyzes the reduction of oxygen to water. Electrons originating from reduced cytochrome c in the intermembrane space (IMS) are transferred via the dinuclear copper A center (CU(A)) of subunit 2 and heme A of subunit 1 to the active site in subunit 1, a binuclear center (BNC) formed by heme A3 and copper B (CU(B)). The BNC reduces molecular oxygen to 2 water molecules using 4 electrons from cytochrome c in the IMS and 4 protons from the mitochondrial matrix. The sequence is that of Cytochrome c oxidase subunit 5A-1, mitochondrial from Thunnus obesus (Bigeye tuna).